The sequence spans 186 residues: ATP synthase subunit delta (186 aa).

It belongs to the ATPase delta chain family. F-type ATPases have 2 components, F(1) - the catalytic core - and F(0) - the membrane proton channel. F(1) has five subunits: alpha(3), beta(3), gamma(1), delta(1), epsilon(1). F(0) has three main subunits: a(1), b(2) and c(10-14). The alpha and beta chains form an alternating ring which encloses part of the gamma chain. F(1) is attached to F(0) by a central stalk formed by the gamma and epsilon chains, while a peripheral stalk is formed by the delta and b chains.

Its subcellular location is the cell membrane. In terms of biological role, f(1)F(0) ATP synthase produces ATP from ADP in the presence of a proton or sodium gradient. F-type ATPases consist of two structural domains, F(1) containing the extramembraneous catalytic core and F(0) containing the membrane proton channel, linked together by a central stalk and a peripheral stalk. During catalysis, ATP synthesis in the catalytic domain of F(1) is coupled via a rotary mechanism of the central stalk subunits to proton translocation. This protein is part of the stalk that links CF(0) to CF(1). It either transmits conformational changes from CF(0) to CF(1) or is implicated in proton conduction. In Symbiobacterium thermophilum (strain DSM 24528 / JCM 14929 / IAM 14863 / T), this protein is ATP synthase subunit delta.